The sequence spans 95 residues: Aspartyl/glutamyl-tRNA(Asn/Gln) amidotransferase subunit C (95 aa).

It belongs to the GatC family. As to quaternary structure, heterotrimer of A, B and C subunits.

It carries out the reaction L-glutamyl-tRNA(Gln) + L-glutamine + ATP + H2O = L-glutaminyl-tRNA(Gln) + L-glutamate + ADP + phosphate + H(+). The catalysed reaction is L-aspartyl-tRNA(Asn) + L-glutamine + ATP + H2O = L-asparaginyl-tRNA(Asn) + L-glutamate + ADP + phosphate + 2 H(+). Its function is as follows. Allows the formation of correctly charged Asn-tRNA(Asn) or Gln-tRNA(Gln) through the transamidation of misacylated Asp-tRNA(Asn) or Glu-tRNA(Gln) in organisms which lack either or both of asparaginyl-tRNA or glutaminyl-tRNA synthetases. The reaction takes place in the presence of glutamine and ATP through an activated phospho-Asp-tRNA(Asn) or phospho-Glu-tRNA(Gln). This Vesicomyosocius okutanii subsp. Calyptogena okutanii (strain HA) protein is Aspartyl/glutamyl-tRNA(Asn/Gln) amidotransferase subunit C.